A 145-amino-acid chain; its full sequence is Ribosome maturation factor RimP (145 aa).

The protein belongs to the RimP family.

The protein resides in the cytoplasm. Functionally, required for maturation of 30S ribosomal subunits. This is Ribosome maturation factor RimP from Borreliella afzelii (strain PKo) (Borrelia afzelii).